Consider the following 329-residue polypeptide: MAP kinase-activated protein kinase 2 (329 aa).

ATP contacts are provided by residues 1–7 and Lys-22; that span reads LGINGKV. The Protein kinase domain occupies 1–254; sequence LGINGKVLRI…ITEFMNHPWI (254 aa). 68–70 contacts staurosporine; it reads ECL. The active-site Proton acceptor is Asp-115. At Thr-151 the chain carries Phosphothreonine; by MAPK14. Ser-201 carries the phosphoserine; by MAPK14 modification. Ser-257 is modified (phosphoserine; by autocatalysis). Residues 257–293 form an autoinhibitory helix region; that stretch reads STKVPQTPLHTSRVLKEDKERWEDVKEEMTSALATMR. Position 263 is a phosphothreonine; by MAPK14 (Thr-263). A Glycyl lysine isopeptide (Lys-Gly) (interchain with G-Cter in SUMO) cross-link involves residue Lys-282. The short motif at 285–294 is the Nuclear export signal (NES) element; the sequence is MTSALATMRV. The p38 MAPK-binding site stretch occupies residues 295–319; the sequence is DYEQIKIKKIEDASNPLLLKRRKKA. 2 consecutive short sequence motifs (bipartite nuclear localization signal) follow at residues 300 to 303 and 314 to 318; these read KIKK and KRRKK.

It belongs to the protein kinase superfamily. CAMK Ser/Thr protein kinase family. Heterodimer with p38-alpha/MAPK14; this heterodimer forms a stable complex: molecules are positioned 'face to face' so that the ATP-binding sites of both kinases are at the heterodimer interface. Interacts with PHC2. Interacts with HSF1. Post-translationally, sumoylation inhibits the protein kinase activity. In terms of processing, phosphorylated and activated by MAP kinase p38-alpha/MAPK14 at Thr-151, Ser-201 and Thr-263.

The protein localises to the cytoplasm. The protein resides in the nucleus. The enzyme catalyses L-seryl-[protein] + ATP = O-phospho-L-seryl-[protein] + ADP + H(+). It carries out the reaction L-threonyl-[protein] + ATP = O-phospho-L-threonyl-[protein] + ADP + H(+). Its activity is regulated as follows. Activated following phosphorylation by p38-alpha/MAPK14 following various stresses. Inhibited following sumoylation. Specifically inhibited by pyrrolopyridine inhibitors. Functionally, stress-activated serine/threonine-protein kinase involved in cytokine production, endocytosis, reorganization of the cytoskeleton, cell migration, cell cycle control, chromatin remodeling, DNA damage response and transcriptional regulation. Following stress, it is phosphorylated and activated by MAP kinase p38-alpha/MAPK14, leading to phosphorylation of substrates. Phosphorylates serine in the peptide sequence, Hyd-X-R-X(2)-S, where Hyd is a large hydrophobic residue. Phosphorylates ALOX5, CDC25B, CDC25C, CEP131, ELAVL1, HNRNPA0, HSP27/HSPB1, KRT18, KRT20, LIMK1, LSP1, PABPC1, PARN, PDE4A, RCSD1, RPS6KA3, TAB3 and TTP/ZFP36. Phosphorylates HSF1; leading to the interaction with HSP90 proteins and inhibiting HSF1 homotrimerization, DNA-binding and transactivation activities. Mediates phosphorylation of HSP27/HSPB1 in response to stress, leading to the dissociation of HSP27/HSPB1 from large small heat-shock protein (sHsps) oligomers and impairment of their chaperone activities and ability to protect against oxidative stress effectively. Involved in inflammatory response by regulating tumor necrosis factor (TNF) and IL6 production post-transcriptionally: acts by phosphorylating AU-rich elements (AREs)-binding proteins ELAVL1, HNRNPA0, PABPC1 and TTP/ZFP36, leading to regulation of the stability and translation of TNF and IL6 mRNAs. Phosphorylation of TTP/ZFP36, a major post-transcriptional regulator of TNF, promotes its binding to 14-3-3 proteins and reduces its ARE mRNA affinity, leading to inhibition of dependent degradation of ARE-containing transcripts. Phosphorylates CEP131 in response to cellular stress following ultraviolet irradiation which promotes binding of CEP131 to 14-3-3 proteins and inhibits formation of novel centriolar satellites. Also involved in late G2/M checkpoint following DNA damage through a process of post-transcriptional mRNA stabilization: following DNA damage, relocalizes from nucleus to cytoplasm and phosphorylates HNRNPA0 and PARN, leading to stabilization of GADD45A mRNA. Involved in toll-like receptor signaling pathway (TLR) in dendritic cells: required for acute TLR-induced macropinocytosis by phosphorylating and activating RPS6KA3. This chain is MAP kinase-activated protein kinase 2 (MAPKAPK2), found in Cricetulus longicaudatus (Long-tailed dwarf hamster).